The following is a 697-amino-acid chain: Polyribonucleotide nucleotidyltransferase (697 aa).

Mg(2+)-binding residues include Asp-490 and Asp-496. Residues 557–616 (PKVVTMTIKPEKIRDVIGPGGKKINEIIDETGVKLDIEQDGTIFIGAVDKDAIARARSII) enclose the KH domain. The 69-residue stretch at 626–694 (GQVYEGKVKR…KQGRVNASHK (69 aa)) folds into the S1 motif domain.

It belongs to the polyribonucleotide nucleotidyltransferase family. It depends on Mg(2+) as a cofactor.

Its subcellular location is the cytoplasm. The catalysed reaction is RNA(n+1) + phosphate = RNA(n) + a ribonucleoside 5'-diphosphate. In terms of biological role, involved in mRNA degradation. Catalyzes the phosphorolysis of single-stranded polyribonucleotides processively in the 3'- to 5'-direction. This Staphylococcus saprophyticus subsp. saprophyticus (strain ATCC 15305 / DSM 20229 / NCIMB 8711 / NCTC 7292 / S-41) protein is Polyribonucleotide nucleotidyltransferase.